A 725-amino-acid chain; its full sequence is Dipeptidyl-peptidase 5 (725 aa).

An N-terminal signal peptide occupies residues 1–18 (MGALRWLSIAATASTALA). Asparagine 75, asparagine 96, asparagine 153, asparagine 258, asparagine 383, and asparagine 453 each carry an N-linked (GlcNAc...) asparagine glycan. Serine 563 acts as the Charge relay system in catalysis. Residue asparagine 610 is glycosylated (N-linked (GlcNAc...) asparagine). Catalysis depends on charge relay system residues aspartate 646 and histidine 678.

The protein belongs to the peptidase S9C family.

Its subcellular location is the secreted. The chain is Dipeptidyl-peptidase 5 from Aspergillus oryzae (strain ATCC 42149 / RIB 40) (Yellow koji mold).